The following is a 248-amino-acid chain: Ribosomal RNA small subunit methyltransferase G (248 aa).

S-adenosyl-L-methionine is bound by residues Gly-93, Leu-98, 143-144 (AE), and Arg-161.

The protein belongs to the methyltransferase superfamily. RNA methyltransferase RsmG family.

Its subcellular location is the cytoplasm. Functionally, specifically methylates the N7 position of guanine in position 518 of 16S rRNA. In Mycobacterium leprae (strain Br4923), this protein is Ribosomal RNA small subunit methyltransferase G.